The following is a 339-amino-acid chain: Ketol-acid reductoisomerase (NADP(+)) (339 aa).

The KARI N-terminal Rossmann domain maps to 1-182; that stretch reads MRVYYDRDAD…GGGRAGIIET (182 aa). Residues 24-27, Arg-48, Ser-51, Thr-53, and 83-86 contribute to the NADP(+) site; these read YGSQ and DELQ. Residue His-108 is part of the active site. Gly-134 is an NADP(+) binding site. The region spanning 183–328 is the KARI C-terminal knotted domain; that stretch reads SFKEECETDL…AKLREMMPWI (146 aa). Residues Asp-191, Glu-195, Glu-227, and Glu-231 each coordinate Mg(2+). Ser-252 is a substrate binding site.

Belongs to the ketol-acid reductoisomerase family. Requires Mg(2+) as cofactor.

The enzyme catalyses (2R)-2,3-dihydroxy-3-methylbutanoate + NADP(+) = (2S)-2-acetolactate + NADPH + H(+). The catalysed reaction is (2R,3R)-2,3-dihydroxy-3-methylpentanoate + NADP(+) = (S)-2-ethyl-2-hydroxy-3-oxobutanoate + NADPH + H(+). It functions in the pathway amino-acid biosynthesis; L-isoleucine biosynthesis; L-isoleucine from 2-oxobutanoate: step 2/4. Its pathway is amino-acid biosynthesis; L-valine biosynthesis; L-valine from pyruvate: step 2/4. Functionally, involved in the biosynthesis of branched-chain amino acids (BCAA). Catalyzes an alkyl-migration followed by a ketol-acid reduction of (S)-2-acetolactate (S2AL) to yield (R)-2,3-dihydroxy-isovalerate. In the isomerase reaction, S2AL is rearranged via a Mg-dependent methyl migration to produce 3-hydroxy-3-methyl-2-ketobutyrate (HMKB). In the reductase reaction, this 2-ketoacid undergoes a metal-dependent reduction by NADPH to yield (R)-2,3-dihydroxy-isovalerate. This is Ketol-acid reductoisomerase (NADP(+)) from Rhodopseudomonas palustris (strain BisB5).